The primary structure comprises 210 residues: Large ribosomal subunit protein uL4 (210 aa).

Polar residues predominate over residues 41-52; the sequence is QTNARQGTASTK. Positions 41 to 71 are disordered; sequence QTNARQGTASTKTRAEVRGGGRKPWRQKGTG. Residues 60 to 71 are compositionally biased toward basic residues; that stretch reads GGRKPWRQKGTG.

It belongs to the universal ribosomal protein uL4 family. As to quaternary structure, part of the 50S ribosomal subunit.

Its function is as follows. One of the primary rRNA binding proteins, this protein initially binds near the 5'-end of the 23S rRNA. It is important during the early stages of 50S assembly. It makes multiple contacts with different domains of the 23S rRNA in the assembled 50S subunit and ribosome. Forms part of the polypeptide exit tunnel. This is Large ribosomal subunit protein uL4 from Nostoc sp. (strain PCC 7120 / SAG 25.82 / UTEX 2576).